The primary structure comprises 169 residues: GTP-dependent dephospho-CoA kinase (169 aa).

GTP is bound by residues D45, D64, K66, and E121.

Belongs to the GTP-dependent DPCK family.

The catalysed reaction is 3'-dephospho-CoA + GTP = GDP + CoA + H(+). It participates in cofactor biosynthesis; coenzyme A biosynthesis. Functionally, catalyzes the GTP-dependent phosphorylation of the 3'-hydroxyl group of dephosphocoenzyme A to form coenzyme A (CoA). The sequence is that of GTP-dependent dephospho-CoA kinase from Methanosphaera stadtmanae (strain ATCC 43021 / DSM 3091 / JCM 11832 / MCB-3).